A 125-amino-acid polypeptide reads, in one-letter code: Holo-[acyl-carrier-protein] synthase (125 aa).

Mg(2+) contacts are provided by E9 and Q58.

Belongs to the P-Pant transferase superfamily. AcpS family. Requires Mg(2+) as cofactor.

It is found in the cytoplasm. The catalysed reaction is apo-[ACP] + CoA = holo-[ACP] + adenosine 3',5'-bisphosphate + H(+). In terms of biological role, transfers the 4'-phosphopantetheine moiety from coenzyme A to a Ser of acyl-carrier-protein. The polypeptide is Holo-[acyl-carrier-protein] synthase (Rhodopirellula baltica (strain DSM 10527 / NCIMB 13988 / SH1)).